Consider the following 233-residue polypeptide: Ribosome maturation factor RimP (233 aa).

Basic and acidic residues predominate over residues 167–179; it reads RGKAAEREKKRDL. The disordered stretch occupies residues 167–233; that stretch reads RGKAAEREKK…RARRGEIDPD (67 aa). Residues 187 to 196 are compositionally biased toward low complexity; the sequence is PHAKPAAQAK. A compositionally biased stretch (basic and acidic residues) spans 220–233; sequence LAADRARRGEIDPD.

The protein belongs to the RimP family.

Its subcellular location is the cytoplasm. Required for maturation of 30S ribosomal subunits. This is Ribosome maturation factor RimP from Bradyrhizobium sp. (strain ORS 278).